The primary structure comprises 190 residues: Secreted isochorismatase effector Isc1 (190 aa).

Residues D26, K100, and C133 contribute to the active site.

Belongs to the isochorismatase family.

The protein resides in the secreted. Its subcellular location is the host cytoplasm. It is found in the host nucleus. The catalysed reaction is isochorismate + H2O = (2S,3S)-2,3-dihydroxy-2,3-dihydrobenzoate + pyruvate. Secreted isochorismatase required for full virulence of V.dahliae. Suppresses salicylate-mediated innate immunity of the host by disrupting the plant salicylate metabolism pathway via hydrolysis of its isochorismate precursor. This Verticillium dahliae (strain VdLs.17 / ATCC MYA-4575 / FGSC 10137) (Verticillium wilt) protein is Secreted isochorismatase effector Isc1.